The primary structure comprises 250 residues: Manganese transport system ATP-binding protein MntB (250 aa).

One can recognise an ABC transporter domain in the interval 5 to 236 (VKVDNLSVFY…MVAKTYQGNL (232 aa)). 37-44 (GPNGAGKS) is a binding site for ATP.

Belongs to the ABC transporter superfamily.

It localises to the cell membrane. In terms of biological role, this protein is probably a component of a manganese permease, a binding protein-dependent, ATP-driven transport system. Probably responsible for energy coupling to the transport system. In Halalkalibacterium halodurans (strain ATCC BAA-125 / DSM 18197 / FERM 7344 / JCM 9153 / C-125) (Bacillus halodurans), this protein is Manganese transport system ATP-binding protein MntB (mntB).